The chain runs to 429 residues: Mannose-6-phosphate isomerase (429 aa).

An N-acetylserine modification is found at Ser2. Ser107 is modified (phosphoserine). Gln109, His111, Glu136, and His281 together coordinate Zn(2+). Arg300 is an active-site residue.

It belongs to the mannose-6-phosphate isomerase type 1 family. In terms of assembly, monomer. It depends on Zn(2+) as a cofactor.

The protein localises to the cytoplasm. It catalyses the reaction D-mannose 6-phosphate = D-fructose 6-phosphate. The protein operates within nucleotide-sugar biosynthesis; GDP-alpha-D-mannose biosynthesis; alpha-D-mannose 1-phosphate from D-fructose 6-phosphate: step 1/2. With respect to regulation, can be inhibited by an excess of zinc. In terms of biological role, involved in the synthesis of the GDP-mannose and dolichol-phosphate-mannose required for a number of critical mannosyl transfer reactions. This chain is Mannose-6-phosphate isomerase (PMI40), found in Saccharomyces cerevisiae (strain ATCC 204508 / S288c) (Baker's yeast).